The following is a 349-amino-acid chain: Protein-glutamate methylesterase/protein-glutamine glutaminase 1 (349 aa).

The region spanning 4–119 (RILVVDDSAV…KGFLEDSARR (116 aa)) is the Response regulatory domain. Position 53 is a 4-aspartylphosphate (aspartate 53). In terms of domain architecture, CheB-type methylesterase spans 159 to 349 (PRAGRAELVV…VASAVLAWAR (191 aa)). Catalysis depends on residues serine 172, histidine 198, and aspartate 293.

The protein belongs to the CheB family. Phosphorylated by CheA. Phosphorylation of the N-terminal regulatory domain activates the methylesterase activity.

It localises to the cytoplasm. The enzyme catalyses [protein]-L-glutamate 5-O-methyl ester + H2O = L-glutamyl-[protein] + methanol + H(+). The catalysed reaction is L-glutaminyl-[protein] + H2O = L-glutamyl-[protein] + NH4(+). Involved in chemotaxis. Part of a chemotaxis signal transduction system that modulates chemotaxis in response to various stimuli. Catalyzes the demethylation of specific methylglutamate residues introduced into the chemoreceptors (methyl-accepting chemotaxis proteins or MCP) by CheR. Also mediates the irreversible deamidation of specific glutamine residues to glutamic acid. The chain is Protein-glutamate methylesterase/protein-glutamine glutaminase 1 from Anaeromyxobacter dehalogenans (strain 2CP-C).